A 249-amino-acid polypeptide reads, in one-letter code: MMGRPEGLKLIDENGRRIDGRRKYELRKIHMEVGVLKNADGSAYIEWGKNKILAAVYGPREIHPKHLQRPDTAVLRVRYNMAPFSVEERKKPGPDRRSVEISKVIRGALEPALILEMFPRTVVDVFIEVLQADAGTRVAGITAASLALADAGVPMRDLVAACAAGKIDGEIVLDLNKDEDNYGEADVPVAIMPLKNDITLLQMDGYLTKEEFIEAVKLAIKGAKAVYQKQREALKEKYLKIAQEVAGDE.

It belongs to the RNase PH family. Rrp41 subfamily. As to quaternary structure, component of the archaeal exosome complex. Forms a hexameric ring-like arrangement composed of 3 Rrp41-Rrp42 heterodimers. The hexameric ring associates with a trimer of Rrp4 and/or Csl4 subunits.

The protein localises to the cytoplasm. Functionally, catalytic component of the exosome, which is a complex involved in RNA degradation. Has 3'-&gt;5' exoribonuclease activity. Can also synthesize heteromeric RNA-tails. The polypeptide is Exosome complex component Rrp41 (Thermococcus gammatolerans (strain DSM 15229 / JCM 11827 / EJ3)).